Reading from the N-terminus, the 210-residue chain is Glycerol-3-phosphate acyltransferase 2 (210 aa).

The next 6 helical transmembrane spans lie at Leu-4 to Tyr-24, Val-52 to Met-72, Ala-73 to Ile-93, Ile-114 to Ile-134, Phe-141 to Gln-161, and Asp-163 to Pro-183.

This sequence belongs to the PlsY family. As to quaternary structure, probably interacts with PlsX.

The protein resides in the cell membrane. The catalysed reaction is an acyl phosphate + sn-glycerol 3-phosphate = a 1-acyl-sn-glycero-3-phosphate + phosphate. Its pathway is lipid metabolism; phospholipid metabolism. Catalyzes the transfer of an acyl group from acyl-phosphate (acyl-PO(4)) to glycerol-3-phosphate (G3P) to form lysophosphatidic acid (LPA). This enzyme utilizes acyl-phosphate as fatty acyl donor, but not acyl-CoA or acyl-ACP. The protein is Glycerol-3-phosphate acyltransferase 2 of Dehalococcoides mccartyi (strain CBDB1).